Consider the following 338-residue polypeptide: Anthranilate phosphoribosyltransferase (338 aa).

Residues glycine 81, 84–85 (GD), threonine 89, 91–94 (NIST), 109–117 (KHGNRALSS), and alanine 121 contribute to the 5-phospho-alpha-D-ribose 1-diphosphate site. An anthranilate-binding site is contributed by glycine 81. Mg(2+) is bound at residue serine 93. Position 112 (asparagine 112) interacts with anthranilate. Arginine 167 is an anthranilate binding site. Mg(2+)-binding residues include aspartate 225 and glutamate 226.

Belongs to the anthranilate phosphoribosyltransferase family. In terms of assembly, homodimer. It depends on Mg(2+) as a cofactor.

It catalyses the reaction N-(5-phospho-beta-D-ribosyl)anthranilate + diphosphate = 5-phospho-alpha-D-ribose 1-diphosphate + anthranilate. It functions in the pathway amino-acid biosynthesis; L-tryptophan biosynthesis; L-tryptophan from chorismate: step 2/5. Catalyzes the transfer of the phosphoribosyl group of 5-phosphorylribose-1-pyrophosphate (PRPP) to anthranilate to yield N-(5'-phosphoribosyl)-anthranilate (PRA). In Rhizobium johnstonii (strain DSM 114642 / LMG 32736 / 3841) (Rhizobium leguminosarum bv. viciae), this protein is Anthranilate phosphoribosyltransferase.